Here is a 283-residue protein sequence, read N- to C-terminus: Putative pyruvate, phosphate dikinase regulatory protein (283 aa).

Residue 156–163 (GLSRAGKT) coordinates ADP.

Belongs to the pyruvate, phosphate/water dikinase regulatory protein family. PDRP subfamily.

The catalysed reaction is N(tele)-phospho-L-histidyl/L-threonyl-[pyruvate, phosphate dikinase] + ADP = N(tele)-phospho-L-histidyl/O-phospho-L-threonyl-[pyruvate, phosphate dikinase] + AMP + H(+). It carries out the reaction N(tele)-phospho-L-histidyl/O-phospho-L-threonyl-[pyruvate, phosphate dikinase] + phosphate + H(+) = N(tele)-phospho-L-histidyl/L-threonyl-[pyruvate, phosphate dikinase] + diphosphate. In terms of biological role, bifunctional serine/threonine kinase and phosphorylase involved in the regulation of the pyruvate, phosphate dikinase (PPDK) by catalyzing its phosphorylation/dephosphorylation. This chain is Putative pyruvate, phosphate dikinase regulatory protein, found in Desulfotalea psychrophila (strain LSv54 / DSM 12343).